Here is a 208-residue protein sequence, read N- to C-terminus: Dual specificity protein phosphatase 22-A (208 aa).

A Tyrosine-protein phosphatase domain is found at 4–144 (GMNKVIDGLY…LQEFQMKQVS (141 aa)). C88 serves as the catalytic Phosphocysteine intermediate.

Belongs to the protein-tyrosine phosphatase family. Non-receptor class dual specificity subfamily.

The protein resides in the cytoplasm. It is found in the nucleus. It catalyses the reaction O-phospho-L-tyrosyl-[protein] + H2O = L-tyrosyl-[protein] + phosphate. It carries out the reaction O-phospho-L-seryl-[protein] + H2O = L-seryl-[protein] + phosphate. The enzyme catalyses O-phospho-L-threonyl-[protein] + H2O = L-threonyl-[protein] + phosphate. Its function is as follows. Activates the Jnk signaling pathway. Dephosphorylates and deactivates p38 and stress-activated protein kinase/c-Jun N-terminal kinase (SAPK/JNK). In Danio rerio (Zebrafish), this protein is Dual specificity protein phosphatase 22-A.